We begin with the raw amino-acid sequence, 448 residues long: SVP1-like protein 2 (448 aa).

6 N-linked (GlcNAc...) asparagine glycosylation sites follow: Asn61, Asn155, Asn256, Asn280, Asn315, and Asn421. WD repeat units lie at residues 222-262 and 267-306; these read AHKN…LIKE and VDKA…NTET. The disordered stretch occupies residues 416–435; that stretch reads THYSLNESLRNEDTKSAGEP. Residues 424–435 show a composition bias toward basic and acidic residues; it reads LRNEDTKSAGEP.

Belongs to the WD repeat PROPPIN family. N-glycosylated.

The protein localises to the endosome membrane. It is found in the prevacuolar compartment membrane. Involved in piecemeal microautophagy of the nucleus (micronucleophagy). The protein is SVP1-like protein 2 (HSV2) of Saccharomyces cerevisiae (strain ATCC 204508 / S288c) (Baker's yeast).